Reading from the N-terminus, the 165-residue chain is Nucleotide-binding protein P9515_05441 (165 aa).

The protein belongs to the YajQ family.

Its function is as follows. Nucleotide-binding protein. The protein is Nucleotide-binding protein P9515_05441 of Prochlorococcus marinus (strain MIT 9515).